Consider the following 608-residue polypeptide: ATP-citrate synthase beta chain protein 1 (608 aa).

ATP-binding positions include 214 to 234 (ILRFNNIPQVKMMVVLGELGG) and 265 to 291 (FKSEVQFGHAGAKSGGELESAQAKNQA). Glu231 contacts Mg(2+). The active-site Tele-phosphohistidine intermediate is His273. 292–302 (LKDAGAVVPTS) lines the CoA pocket.

This sequence belongs to the succinate/malate CoA ligase alpha subunit family. Heterooctamer of 4 alpha and 4 beta chains.

It localises to the cytoplasm. Its subcellular location is the cytosol. The catalysed reaction is oxaloacetate + acetyl-CoA + ADP + phosphate = citrate + ATP + CoA. In terms of biological role, ATP citrate-lyase is the primary enzyme responsible for the synthesis of cytosolic acetyl-CoA, used for the elongation of fatty acids and biosynthesis of isoprenoids, flavonoids and malonated derivatives. May supply substrate to the cytosolic acetyl-CoA carboxylase, which generates the malonyl-CoA used for the synthesis of a multitude of compounds, including very long chain fatty acids and flavonoids. In contrast to all known animal ACL enzymes having a homomeric structure, plant ACLs are composed of alpha and beta chains. The polypeptide is ATP-citrate synthase beta chain protein 1 (ACLB-1) (Oryza sativa subsp. japonica (Rice)).